We begin with the raw amino-acid sequence, 86 residues long: Small ribosomal subunit protein uS17 (86 aa).

The protein belongs to the universal ribosomal protein uS17 family. Part of the 30S ribosomal subunit.

One of the primary rRNA binding proteins, it binds specifically to the 5'-end of 16S ribosomal RNA. The sequence is that of Small ribosomal subunit protein uS17 from Streptococcus mutans serotype c (strain ATCC 700610 / UA159).